The primary structure comprises 337 residues: Glycerol-3-phosphate dehydrogenase [NAD(P)+] (337 aa).

Positions 12 and 107 each coordinate NADPH. Residues Lys-107, Gly-138, and Thr-140 each contribute to the sn-glycerol 3-phosphate site. Residue Ala-142 coordinates NADPH. Sn-glycerol 3-phosphate is bound by residues Lys-193, Asp-246, Ser-256, Arg-257, and Asn-258. The active-site Proton acceptor is Lys-193. An NADPH-binding site is contributed by Arg-257. NADPH-binding residues include Val-282 and Glu-284.

The protein belongs to the NAD-dependent glycerol-3-phosphate dehydrogenase family.

It localises to the cytoplasm. It catalyses the reaction sn-glycerol 3-phosphate + NAD(+) = dihydroxyacetone phosphate + NADH + H(+). The catalysed reaction is sn-glycerol 3-phosphate + NADP(+) = dihydroxyacetone phosphate + NADPH + H(+). It functions in the pathway membrane lipid metabolism; glycerophospholipid metabolism. In terms of biological role, catalyzes the reduction of the glycolytic intermediate dihydroxyacetone phosphate (DHAP) to sn-glycerol 3-phosphate (G3P), the key precursor for phospholipid synthesis. The sequence is that of Glycerol-3-phosphate dehydrogenase [NAD(P)+] from Koribacter versatilis (strain Ellin345).